Consider the following 428-residue polypeptide: MLDPKFLRNELEVTAERLATRGFILDIAHLTQLEEKRKLLQVATEELQASRNAISKSIGQAKARGEDVEAIMAQVGDLGSQLDARKIELAAVLEEVNAIAMSMPNLPDESAPIGADETENVEVRRWGTPRTFNFPIKDHIDLGEGLNGLDFKNAVKITGSRFIVMKGQVARLNRAIGQFMLDLHTIEHGYTEAYVPLLVNEASLLGTGQLPKFGEDLFHTKPATEEGQGLSLIPTAEVPLTNLVRDSIVDEDELPIKLTAHTACFRSEAGSYGKDTRGLIRQHQFDKVEMVQIVKPEDSMAALEALTGHAETVLQRLGLPYRTVILCTGDMGFGSSKTYDIEVWLPAQNTYREISSCSNMKDFQARRMQARYRVKADNKPALLHTLNGSGLAVGRTLVAILENYQNADGSITIPEVLRPYMGGLTQIG.

Residue 235–237 (TAE) coordinates L-serine. 266–268 (RSE) is a binding site for ATP. E289 provides a ligand contact to L-serine. An ATP-binding site is contributed by 353 to 356 (EISS). S389 contacts L-serine.

Belongs to the class-II aminoacyl-tRNA synthetase family. Type-1 seryl-tRNA synthetase subfamily. Homodimer. The tRNA molecule binds across the dimer.

The protein resides in the cytoplasm. The enzyme catalyses tRNA(Ser) + L-serine + ATP = L-seryl-tRNA(Ser) + AMP + diphosphate + H(+). It catalyses the reaction tRNA(Sec) + L-serine + ATP = L-seryl-tRNA(Sec) + AMP + diphosphate + H(+). It participates in aminoacyl-tRNA biosynthesis; selenocysteinyl-tRNA(Sec) biosynthesis; L-seryl-tRNA(Sec) from L-serine and tRNA(Sec): step 1/1. Functionally, catalyzes the attachment of serine to tRNA(Ser). Is also able to aminoacylate tRNA(Sec) with serine, to form the misacylated tRNA L-seryl-tRNA(Sec), which will be further converted into selenocysteinyl-tRNA(Sec). This is Serine--tRNA ligase from Shewanella baltica (strain OS223).